The primary structure comprises 274 residues: Phosphoribosylaminoimidazole-succinocarboxamide synthase (274 aa).

Belongs to the SAICAR synthetase family.

It catalyses the reaction 5-amino-1-(5-phospho-D-ribosyl)imidazole-4-carboxylate + L-aspartate + ATP = (2S)-2-[5-amino-1-(5-phospho-beta-D-ribosyl)imidazole-4-carboxamido]succinate + ADP + phosphate + 2 H(+). It functions in the pathway purine metabolism; IMP biosynthesis via de novo pathway; 5-amino-1-(5-phospho-D-ribosyl)imidazole-4-carboxamide from 5-amino-1-(5-phospho-D-ribosyl)imidazole-4-carboxylate: step 1/2. The polypeptide is Phosphoribosylaminoimidazole-succinocarboxamide synthase (Nitrosopumilus maritimus (strain SCM1)).